A 291-amino-acid chain; its full sequence is 4-diphosphocytidyl-2-C-methyl-D-erythritol kinase (291 aa).

K11 is an active-site residue. 95-105 provides a ligand contact to ATP; the sequence is PVAAGMAGGSS. Residue D137 is part of the active site.

The protein belongs to the GHMP kinase family. IspE subfamily.

It catalyses the reaction 4-CDP-2-C-methyl-D-erythritol + ATP = 4-CDP-2-C-methyl-D-erythritol 2-phosphate + ADP + H(+). Its pathway is isoprenoid biosynthesis; isopentenyl diphosphate biosynthesis via DXP pathway; isopentenyl diphosphate from 1-deoxy-D-xylulose 5-phosphate: step 3/6. Its function is as follows. Catalyzes the phosphorylation of the position 2 hydroxy group of 4-diphosphocytidyl-2C-methyl-D-erythritol. The chain is 4-diphosphocytidyl-2-C-methyl-D-erythritol kinase from Lachnoclostridium phytofermentans (strain ATCC 700394 / DSM 18823 / ISDg) (Clostridium phytofermentans).